A 344-amino-acid chain; its full sequence is tRNA N6-adenosine threonylcarbamoyltransferase (344 aa).

Residues His119 and His123 each coordinate Fe cation. Residues 141–145 (VVSGG), Asp174, Gly187, Asp191, and Asn280 each bind substrate. Asp310 lines the Fe cation pocket.

This sequence belongs to the KAE1 / TsaD family. It depends on Fe(2+) as a cofactor.

The protein localises to the cytoplasm. The catalysed reaction is L-threonylcarbamoyladenylate + adenosine(37) in tRNA = N(6)-L-threonylcarbamoyladenosine(37) in tRNA + AMP + H(+). Its function is as follows. Required for the formation of a threonylcarbamoyl group on adenosine at position 37 (t(6)A37) in tRNAs that read codons beginning with adenine. Is involved in the transfer of the threonylcarbamoyl moiety of threonylcarbamoyl-AMP (TC-AMP) to the N6 group of A37, together with TsaE and TsaB. TsaD likely plays a direct catalytic role in this reaction. The sequence is that of tRNA N6-adenosine threonylcarbamoyltransferase from Listeria welshimeri serovar 6b (strain ATCC 35897 / DSM 20650 / CCUG 15529 / CIP 8149 / NCTC 11857 / SLCC 5334 / V8).